We begin with the raw amino-acid sequence, 251 residues long: Hydroxyacylglutathione hydrolase (251 aa).

Residues histidine 53, histidine 55, aspartate 57, histidine 58, histidine 110, aspartate 127, and histidine 165 each coordinate Zn(2+).

The protein belongs to the metallo-beta-lactamase superfamily. Glyoxalase II family. Monomer. Requires Zn(2+) as cofactor.

It carries out the reaction an S-(2-hydroxyacyl)glutathione + H2O = a 2-hydroxy carboxylate + glutathione + H(+). The protein operates within secondary metabolite metabolism; methylglyoxal degradation; (R)-lactate from methylglyoxal: step 2/2. In terms of biological role, thiolesterase that catalyzes the hydrolysis of S-D-lactoyl-glutathione to form glutathione and D-lactic acid. This chain is Hydroxyacylglutathione hydrolase, found in Yersinia enterocolitica serotype O:8 / biotype 1B (strain NCTC 13174 / 8081).